The sequence spans 223 residues: Cytidine deaminase 3 (223 aa).

CMP/dCMP-type deaminase domains are found at residues 21 to 154 (TEPM…FSPD) and 184 to 223 (SDCS…WYRG). 62–64 (NVE) contacts substrate. A Zn(2+)-binding site is contributed by His75. Glu77 acts as the Proton donor in catalysis. Positions 110 and 113 each coordinate Zn(2+).

The protein belongs to the cytidine and deoxycytidylate deaminase family. Homodimer. Zn(2+) is required as a cofactor.

It carries out the reaction cytidine + H2O + H(+) = uridine + NH4(+). It catalyses the reaction 2'-deoxycytidine + H2O + H(+) = 2'-deoxyuridine + NH4(+). Its function is as follows. This enzyme scavenges exogenous and endogenous cytidine and 2'-deoxycytidine for UMP synthesis. In Arabidopsis thaliana (Mouse-ear cress), this protein is Cytidine deaminase 3 (CDA3).